Consider the following 705-residue polypeptide: Prolyl endopeptidase (705 aa).

The signal sequence occupies residues 1–20 (MKYKKLSVAVAAFAFAAVSA). Residues Ser556 and His675 each act as charge relay system in the active site.

The protein belongs to the peptidase S9A family. Monomer.

It is found in the periplasm. The catalysed reaction is Hydrolysis of Pro-|-Xaa &gt;&gt; Ala-|-Xaa in oligopeptides.. Cleaves peptide bonds on the C-terminal side of prolyl residues within peptides that are up to approximately 30 amino acids long. Has an absolute requirement for an X-Pro bond in the trans configuration immediately preceding the Pro-Y scissible bond. The sequence is that of Prolyl endopeptidase from Elizabethkingia miricola (Chryseobacterium miricola).